The following is a 184-amino-acid chain: Transmembrane protein 140 (184 aa).

Topologically, residues 1–12 are cytoplasmic; that stretch reads MAISRVWRNRLS. Residues 13–33 traverse the membrane as a helical segment; that stretch reads FMAIMILVAMVLSLMSYALLW. Over 34–83 the chain is Extracellular; it reads KAGNLTDVPNLRIGFYNFCLWKEDIGSLECYNFPELGVLGIPQVGLALAR. Asn37 is a glycosylation site (N-linked (GlcNAc...) asparagine). A helical transmembrane segment spans residues 84–104; that stretch reads LGVYGALVLAVFVPLPLLLAQ. At 105-117 the chain is on the cytoplasmic side; sequence CNSDEGEWRLAVG. Residues 118 to 138 form a helical membrane-spanning segment; it reads FLGASSVLLAGGLSLFLFLVW. The Extracellular segment spans residues 139 to 149; it reads KWLRLSFLGPG. A helical membrane pass occupies residues 150–170; that stretch reads FLSLCLAQALLIILLMAMVMF. Residues 171 to 184 are Cytoplasmic-facing; sequence PPRDKKDKNHWENC.

It localises to the membrane. The chain is Transmembrane protein 140 (Tmem140) from Rattus norvegicus (Rat).